The chain runs to 329 residues: Cathepsin K (329 aa).

An N-terminal signal peptide occupies residues 1–15; it reads MWGLTVLLLPVVSFA. Positions 16–114 are cleaved as a propeptide — activation peptide; sequence LYPEEILDTQ…TLYIPDWEGR (99 aa). Asparagine 103 carries an N-linked (GlcNAc...) asparagine glycan. 3 disulfide bridges follow: cysteine 136–cysteine 177, cysteine 170–cysteine 210, and cysteine 269–cysteine 318. Cysteine 139 is a catalytic residue. Active-site residues include histidine 276 and asparagine 296.

Belongs to the peptidase C1 family.

It localises to the lysosome. The protein localises to the secreted. The protein resides in the apical cell membrane. It catalyses the reaction Broad proteolytic activity. With small-molecule substrates and inhibitors, the major determinant of specificity is P2, which is preferably Leu, Met &gt; Phe, and not Arg.. Its function is as follows. Thiol protease involved in osteoclastic bone resorption and may participate partially in the disorder of bone remodeling. Displays potent endoprotease activity against fibrinogen at acid pH. May play an important role in extracellular matrix degradation. Involved in the release of thyroid hormone thyroxine (T4) by limited proteolysis of TG/thyroglobulin in the thyroid follicle lumen. The polypeptide is Cathepsin K (CTSK) (Bos taurus (Bovine)).